Here is a 162-residue protein sequence, read N- to C-terminus: Peroxiredoxin-2C (162 aa).

Residues 4 to 162 (ITVGDVVPDG…SSAEDILKAL (159 aa)) enclose the Thioredoxin domain. The active-site Cysteine sulfenic acid (-SOH) intermediate is the Cys51.

The protein belongs to the peroxiredoxin family. Prx5 subfamily. In terms of assembly, monomer. Highly expressed in buds and flowers. Slightly expressed in green tissues. Also detected in pollen.

The protein resides in the cytoplasm. The catalysed reaction is [glutaredoxin]-dithiol + a hydroperoxide = [glutaredoxin]-disulfide + an alcohol + H2O. Thiol-specific peroxidase that catalyzes the reduction of hydrogen peroxide and organic hydroperoxides to water and alcohols, respectively. Plays a role in cell protection against oxidative stress by detoxifying peroxides and as sensor of hydrogen peroxide-mediated signaling events. This is Peroxiredoxin-2C (PRXIIC) from Arabidopsis thaliana (Mouse-ear cress).